Reading from the N-terminus, the 123-residue chain is Small ribosomal subunit protein uS12 (123 aa).

Residues 10–20 (KGRKKVKKKKT) show a composition bias toward basic residues. The disordered stretch occupies residues 10–32 (KGRKKVKKKKTAPALQGSPQKRG). Asp89 carries the post-translational modification 3-methylthioaspartic acid.

This sequence belongs to the universal ribosomal protein uS12 family. In terms of assembly, part of the 30S ribosomal subunit. Contacts proteins S8 and S17. May interact with IF1 in the 30S initiation complex.

In terms of biological role, with S4 and S5 plays an important role in translational accuracy. Interacts with and stabilizes bases of the 16S rRNA that are involved in tRNA selection in the A site and with the mRNA backbone. Located at the interface of the 30S and 50S subunits, it traverses the body of the 30S subunit contacting proteins on the other side and probably holding the rRNA structure together. The combined cluster of proteins S8, S12 and S17 appears to hold together the shoulder and platform of the 30S subunit. This is Small ribosomal subunit protein uS12 from Halothermothrix orenii (strain H 168 / OCM 544 / DSM 9562).